The primary structure comprises 585 residues: Aspartate--tRNA ligase (585 aa).

Position 173 (glutamate 173) interacts with L-aspartate. The aspartate stretch occupies residues 197–200 (QTLK). Arginine 219 serves as a coordination point for L-aspartate. Residues 219-221 (RDE) and glutamine 228 contribute to the ATP site. Histidine 446 is an L-aspartate binding site. ATP is bound at residue glutamate 480. Arginine 487 contributes to the L-aspartate binding site. Residue 532-535 (GLDR) coordinates ATP.

The protein belongs to the class-II aminoacyl-tRNA synthetase family. Type 1 subfamily. Homodimer.

The protein resides in the cytoplasm. The enzyme catalyses tRNA(Asp) + L-aspartate + ATP = L-aspartyl-tRNA(Asp) + AMP + diphosphate. Functionally, catalyzes the attachment of L-aspartate to tRNA(Asp) in a two-step reaction: L-aspartate is first activated by ATP to form Asp-AMP and then transferred to the acceptor end of tRNA(Asp). The polypeptide is Aspartate--tRNA ligase (Bacteroides fragilis (strain ATCC 25285 / DSM 2151 / CCUG 4856 / JCM 11019 / LMG 10263 / NCTC 9343 / Onslow / VPI 2553 / EN-2)).